The following is a 434-amino-acid chain: MIDQNLLRTNLEEVAQILKLKRNFNLDVARVTSLEEQRKALQVKAENLQAERNARSKNIGAAKARGEDISALLTEVDTMGSELDAAKVELDKVQAEIRELLLNIPNLPADEVPVGKDDSENLEVSRWGTPRQFDFEIKDHVTLGEGLGGLDFPAGVKLTGSRFVVMKSGIARLHRALSQFMLDLHTEQHGYVETYVPYLVNHDTLYGTGQLPKFGEDLFHTQPLDGQDPNAVQKPYALIPTAEVPVTNLVRDEILDEESLPLKLTAHTPCFRSEAGSYGRDTRGLIRMHQFDKVEMVQIVAPEKSMEALEELTGHAEKVLQLLNLPYRKMLLCSGDMSFGSSKTYDLEVWLPAQNTYREISSCSNMWDFQARRMQARCKAKGDKKTRLVHTLNGSGLAVGRTLVAVLENYQNADGSITVPEVLKPYMGGVEVIK.

241-243 (TAE) is a binding site for L-serine. 272–274 (RSE) is a binding site for ATP. Glu295 contributes to the L-serine binding site. 359-362 (EISS) contacts ATP. Ser395 contacts L-serine.

This sequence belongs to the class-II aminoacyl-tRNA synthetase family. Type-1 seryl-tRNA synthetase subfamily. In terms of assembly, homodimer. The tRNA molecule binds across the dimer.

Its subcellular location is the cytoplasm. It carries out the reaction tRNA(Ser) + L-serine + ATP = L-seryl-tRNA(Ser) + AMP + diphosphate + H(+). The catalysed reaction is tRNA(Sec) + L-serine + ATP = L-seryl-tRNA(Sec) + AMP + diphosphate + H(+). Its pathway is aminoacyl-tRNA biosynthesis; selenocysteinyl-tRNA(Sec) biosynthesis; L-seryl-tRNA(Sec) from L-serine and tRNA(Sec): step 1/1. Functionally, catalyzes the attachment of serine to tRNA(Ser). Is also able to aminoacylate tRNA(Sec) with serine, to form the misacylated tRNA L-seryl-tRNA(Sec), which will be further converted into selenocysteinyl-tRNA(Sec). The protein is Serine--tRNA ligase of Glaesserella parasuis serovar 5 (strain SH0165) (Haemophilus parasuis).